We begin with the raw amino-acid sequence, 32 residues long: Islet amyloid polypeptide (32 aa).

Belongs to the calcitonin family. Can form homodimers. Interacts with IDE and INS. Interaction with INS inhibits homodimerization and fibril formation.

It localises to the secreted. Functionally, amylin/IAPP is a glucoregulatory peptide hormone that plays an important role in the regulation of energy homeostasis. Selectively inhibits insulin-stimulated glucose utilization and glycogen deposition in muscle, while not affecting adipocyte glucose metabolism. IAPP function is mediated by the CALCR-RAMPs (AMYRs) receptor complexes. Amylin can also bind CALCR receptor in the absence of RAMPs, although it is more selective for AMYRs. The protein is Islet amyloid polypeptide (IAPP) of Saguinus oedipus (Cotton-top tamarin).